The primary structure comprises 352 residues: tRNA uridine(34) hydroxylase (352 aa).

The Rhodanese domain maps to 144–238 (SDPDVILIDT…YLEEVPASDS (95 aa)). Catalysis depends on C198, which acts as the Cysteine persulfide intermediate.

Belongs to the TrhO family.

The enzyme catalyses uridine(34) in tRNA + AH2 + O2 = 5-hydroxyuridine(34) in tRNA + A + H2O. Functionally, catalyzes oxygen-dependent 5-hydroxyuridine (ho5U) modification at position 34 in tRNAs. The protein is tRNA uridine(34) hydroxylase of Psychrobacter arcticus (strain DSM 17307 / VKM B-2377 / 273-4).